We begin with the raw amino-acid sequence, 64 residues long: MTGREGGKKKPLKQPKKDGKEMDEEDMAFKQKQKEQQKAMEAAKQKAAKGGPLVTGGIKKSGKK.

Residues 1–64 (MTGREGGKKK…TGGIKKSGKK (64 aa)) are disordered. Residues 21–50 (EMDEEDMAFKQKQKEQQKAMEAAKQKAAKG) are a coiled coil. Over residues 27–44 (MAFKQKQKEQQKAMEAAK) the composition is skewed to basic and acidic residues.

It belongs to the TMA7 family.

In Aedes aegypti (Yellowfever mosquito), this protein is Translation machinery-associated protein 7 homolog.